A 152-amino-acid polypeptide reads, in one-letter code: MISIDVQHATQFEDLPSLSNIEQWVETALQFIVTDKNKSALTIRFIDKEESTELNEHYRHKKGPTNVLSFPDEPIPGFPSESFGDLAICAPLVAEEAHAQHKTTEAHFAHLITHGFLHLLGYDHVENEDAEEMENLEIKILSQLGFENPYEE.

Residues histidine 114, histidine 118, and histidine 124 each contribute to the Zn(2+) site.

This sequence belongs to the endoribonuclease YbeY family. Zn(2+) is required as a cofactor.

Its subcellular location is the cytoplasm. Functionally, single strand-specific metallo-endoribonuclease involved in late-stage 70S ribosome quality control and in maturation of the 3' terminus of the 16S rRNA. This chain is Endoribonuclease YbeY, found in Coxiella burnetii (strain CbuK_Q154) (Coxiella burnetii (strain Q154)).